Consider the following 1264-residue polypeptide: MASACGAPGPGGAGPGGALGSPAPAWYHRDLSRAAAEELLARAGRDGSFLVRDSESVAGAFALCVLYQKHVHTYRILPDGEDFLAVQTSQGVPVRRFQTLGELIGLYAQPNQGLVCALLLPVEREREPDPPDDRDVSDGEDEKPPLPPRSGSTSISAPVGPGSPPAAPETPTTPAAESAPNGLSTVSHEYLKGSYGLDLEAVRGGASNLPHLTRTLATSCRRLHSEVDKVLAGLEILSKVFDQQSSPMVTRLLQQQNPAQTGEQELESLVLKLSVLKDFLSGIQKKALKVLQDMSSTAPPAPPQPAIRKAKTVPVQAFEVKLDVTLGDLTKIGKSQKFTLSVDVEGGRLVLLRRQRDSQEDWTTFTHDRIRQLIKSQRVQNKLGVVFEKEKDRTQRKDFIFVSARKREAFCQLLQLMKNKHSKQDEPDMISVFIGSWNMGSVPPPKNVTSWFTSKGLGKTLDEVTVTIPHDIYVFGTQENSVGDREWLDLLRGGLKELTDLDYRPIAMQSLWNIKVAVLVKPEHENRISHVSTSSVKTGIANTLGNKGAVGVSFMFNGTSFGFVNCHLTSGNEKTARRNQNYLDILRLLSLGDRQLSAFDISLRFTHLFWFGDLNYRLDMDIQEILNYISRKEFEPLLRVDQLNLEREKHKVFLRFSEEEISFPPTYRYERGSRDTYAWHKQKPTGVRTNVPSWCDRILWKSYPETHIICNSYGCTDDIVTSDHSPVFGTFEVGVTSQFISKKGLSKTSDQAYIEFESIEAIVKTASRTKFFIEFYSTCLEEYKKSFENDAQSSDNINFLKVQWSSRQLPTLKPILADIEYLQDQHLLLTVKSMDGYESYGECVVALKSMIGSTAQQFLTFLSHRGEETGNIRGSMKVRVPTERLGTRERLYEWISIDKDEAGAKSKAPSVSRGSQDPRSGNRKPAPAEASCPLSKLFEEPEKPPPTGRPPAPPRAASREEPLTPRLKAEGAPEPEGVAAPPPKNSFNNPAYYVLEGVPHQLLPPEPPSPARAPVPPATKNKVAITVPAPQLGRHRPPRVGEGSSSDEESGGTLPPPDFPPPPLPDSAIFLPPSLDPLPGPVVRGRSGGEARGPPPPKAHPRPPLPPGPSPTSTFLGEVASGDDRSCSVLQMAKTLSEVDYAPAGPGRSVLLPGPLELQPPRGLPSDYGRPLSFPPPRIRESIQEDLAEEAPCPQGGRAGGLGEAGMGAWLRAIGLERYEEGLVHNGWDDLEFLSDITEEDLEEAGVQDPAHKRLLLDTLQLSK.

The region spanning 26–122 is the SH2 domain; that stretch reads WYHRDLSRAA…GLVCALLLPV (97 aa). Residues 124 to 137 are compositionally biased toward basic and acidic residues; that stretch reads REREPDPPDDRDVS. Residues 124–182 form a disordered region; it reads REREPDPPDDRDVSDGEDEKPPLPPRSGSTSISAPVGPGSPPAAPETPTTPAAESAPNG. Ser-137 carries the phosphoserine modification. A compositionally biased stretch (low complexity) spans 169-180; sequence ETPTTPAAESAP. Thr-170 carries the post-translational modification Phosphothreonine. A phosphoserine mark is found at Ser-246 and Ser-358. Tyr-892 is subject to Phosphotyrosine. Ser-896 is subject to Phosphoserine. The interval 903–1123 is disordered; sequence GAKSKAPSVS…TFLGEVASGD (221 aa). Pro residues predominate over residues 944–954; the sequence is PPPTGRPPAPP. Positions 950–955 match the SH3-binding motif; it reads PPAPPR. Residues 957-971 are compositionally biased toward basic and acidic residues; that stretch reads ASREEPLTPRLKAEG. Residue Thr-964 is modified to Phosphothreonine. An NPXY motif motif is present at residues 989–992; the sequence is NPAY. Position 992 is a phosphotyrosine (Tyr-992). Composition is skewed to pro residues over residues 1002-1017, 1054-1065, and 1093-1110; these read LLPPEPPSPARAPVPP, LPPPDFPPPPLP, and GPPPPKAHPRPPLPPGPS. Phosphoserine is present on Ser-1137. Residues 1140-1178 are disordered; that stretch reads DYAPAGPGRSVLLPGPLELQPPRGLPSDYGRPLSFPPPR. Phosphotyrosine occurs at positions 1141 and 1168. Residues 1210 to 1264 enclose the SAM domain; that stretch reads WLRAIGLERYEEGLVHNGWDDLEFLSDITEEDLEEAGVQDPAHKRLLLDTLQLSK. Ser-1263 carries the post-translational modification Phosphoserine.

The protein belongs to the inositol 1,4,5-trisphosphate 5-phosphatase family. As to quaternary structure, interacts with tyrosine phosphorylated form of SHC1. Interacts with EGFR. Upon stimulation by the EGF signaling pathway, it forms a complex with SHC1 and EGFR. Interacts with cytoskeletal protein SORBS3/vinexin, promoting its localization to the periphery of cells. Forms a complex with filamin (FLNA or FLNB), actin, GPIb (GP1BA or GP1BB) that regulates cortical and submembraneous actin. Interacts with c-Met/MET, when c-Met/MET is phosphorylated on 'Tyr-1356'. Interacts with p130Cas/BCAR1. Interacts with CENTD3/ARAP3 via its SAM domain. Interacts with c-Cbl/CBL and CAP/SORBS1. Interacts with activated EPHA2 receptor. Interacts with receptor FCGR2A. Interacts with receptor FCGR2B. Interacts with tyrosine kinase ABL1. Interacts with tyrosine kinase TEC. Interacts with CSF1R. Interacts (via N-terminus) with SH3YL1 (via SH3 domain). Interacts with FCRL6 (tyrosine phosphorylated form). Interacts (via SH2 domain) with tyrosine phosphorylated KLRC1 (via ITIM). Interacts with NEDD9/HEF1. Tyrosine phosphorylated by the members of the SRC family after exposure to a diverse array of extracellular stimuli such as insulin, growth factors such as EGF or PDGF, chemokines, integrin ligands and hypertonic and oxidative stress. May be phosphorylated upon IgG receptor FCGR2B-binding. Phosphorylated at Tyr-992 following cell attachment and spreading. Phosphorylated at Tyr-1168 following EGF signaling pathway stimulation. Phosphorylated at Thr-964 in response to PDGF.

The protein localises to the cytoplasm. It is found in the cytosol. Its subcellular location is the membrane. It localises to the cell projection. The protein resides in the filopodium. The protein localises to the lamellipodium. It is found in the basal cell membrane. Its subcellular location is the nucleus. It localises to the nucleus speckle. The protein resides in the cytoskeleton. The protein localises to the spindle pole. The catalysed reaction is a 1,2-diacyl-sn-glycero-3-phospho-(1D-myo-inositol-3,4,5-trisphosphate) + H2O = a 1,2-diacyl-sn-glycero-3-phospho-(1D-myo-inositol-3,4-bisphosphate) + phosphate. It catalyses the reaction 1,2-dioctanoyl-sn-glycero-3-phospho-(1D-myo-inositol-3,4,5-trisphosphate) + H2O = 1,2-dioctanoyl-sn-glycero-3-phospho-(1D-myo-inositol-3,4-bisphosphate) + phosphate. The enzyme catalyses 1,2-dihexadecanoyl-sn-glycero-3-phospho-(1D-myo-inositol-3,4,5-trisphosphate) + H2O = 1,2-dihexadecanoyl-sn-glycero-3-phospho-(1D-myo-inositol-3,4-bisphosphate) + phosphate. Activated upon translocation to the sites of synthesis of PtdIns(3,4,5)P3 in the membrane. Enzymatic activity is enhanced in the presence of phosphatidylserine. In terms of biological role, phosphatidylinositol (PtdIns) phosphatase that specifically hydrolyzes the 5-phosphate of phosphatidylinositol-3,4,5-trisphosphate (PtdIns(3,4,5)P3) to produce PtdIns(3,4)P2, thereby negatively regulating the PI3K (phosphoinositide 3-kinase) pathways. Required for correct mitotic spindle orientation and therefore progression of mitosis. Plays a central role in regulation of PI3K-dependent insulin signaling, although the precise molecular mechanisms and signaling pathways remain unclear. While overexpression reduces both insulin-stimulated MAP kinase and Akt activation, its absence does not affect insulin signaling or GLUT4 trafficking. Confers resistance to dietary obesity. May act by regulating AKT2, but not AKT1, phosphorylation at the plasma membrane. Part of a signaling pathway that regulates actin cytoskeleton remodeling. Required for the maintenance and dynamic remodeling of actin structures as well as in endocytosis, having a major impact on ligand-induced EGFR internalization and degradation. Participates in regulation of cortical and submembraneous actin by hydrolyzing PtdIns(3,4,5)P3 thereby regulating membrane ruffling. Regulates cell adhesion and cell spreading. Required for HGF-mediated lamellipodium formation, cell scattering and spreading. Acts as a negative regulator of EPHA2 receptor endocytosis by inhibiting via PI3K-dependent Rac1 activation. Acts as a regulator of neuritogenesis by regulating PtdIns(3,4,5)P3 level and is required to form an initial protrusive pattern, and later, maintain proper neurite outgrowth. Acts as a negative regulator of the FC-gamma-RIIA receptor (FCGR2A). Mediates signaling from the FC-gamma-RIIB receptor (FCGR2B), playing a central role in terminating signal transduction from activating immune/hematopoietic cell receptor systems. Involved in EGF signaling pathway. Upon stimulation by EGF, it is recruited by EGFR and dephosphorylates PtdIns(3,4,5)P3. Plays a negative role in regulating the PI3K-PKB pathway, possibly by inhibiting PKB activity. Down-regulates Fc-gamma-R-mediated phagocytosis in macrophages independently of INPP5D/SHIP1. In macrophages, down-regulates NF-kappa-B-dependent gene transcription by regulating macrophage colony-stimulating factor (M-CSF)-induced signaling. Plays a role in the localization of AURKA and NEDD9/HEF1 to the basolateral membrane at interphase in polarized cysts, thereby mediates cell cycle homeostasis, cell polarization and cilia assembly. Additionally promotion of cilia growth is also facilitated by hydrolysis of (PtdIns(3,4,5)P3) to PtdIns(3,4)P2. Promotes formation of apical membrane-initiation sites during the initial stages of lumen formation via Rho family-induced actin filament organization and CTNNB1 localization to cell-cell contacts. May also hydrolyze PtdIns(1,3,4,5)P4, and could thus affect the levels of the higher inositol polyphosphates like InsP6. Involved in endochondral ossification. The sequence is that of Phosphatidylinositol 3,4,5-trisphosphate 5-phosphatase 2 from Canis lupus familiaris (Dog).